Reading from the N-terminus, the 107-residue chain is Acidic phospholipase A2 2 (107 aa).

Cystine bridges form between C26/C100, C28/C38, C37/C82, C43/C107, C44/C75, and C62/C73. 3 residues coordinate Ca(2+): Y27, G29, and G31. H41 is a catalytic residue. Residue D42 coordinates Ca(2+). D76 is an active-site residue.

Ca(2+) is required as a cofactor. Expressed by the venom gland.

The protein resides in the secreted. It carries out the reaction a 1,2-diacyl-sn-glycero-3-phosphocholine + H2O = a 1-acyl-sn-glycero-3-phosphocholine + a fatty acid + H(+). Its function is as follows. PLA2 catalyzes the calcium-dependent hydrolysis of the 2-acyl groups in 3-sn-phosphoglycerides. In Bothrops insularis (Golden lancehead), this protein is Acidic phospholipase A2 2.